The sequence spans 289 residues: uncharacterized protein (289 aa).

The tract at residues 25-66 is disordered; it reads GGSGDSQSAHTPSTSIHTQNNSTPNKNTSTPPVNVSNANNLE. Residues 33-43 show a composition bias toward polar residues; sequence AHTPSTSIHTQ. The segment covering 44–59 has biased composition (low complexity); the sequence is NNSTPNKNTSTPPVNV.

This is an uncharacterized protein from Haemophilus influenzae (strain ATCC 51907 / DSM 11121 / KW20 / Rd).